Reading from the N-terminus, the 414-residue chain is Serine hydroxymethyltransferase (414 aa).

(6S)-5,6,7,8-tetrahydrofolate-binding positions include leucine 116 and 120–122; that span reads GHL. Lysine 224 carries the post-translational modification N6-(pyridoxal phosphate)lysine. (6S)-5,6,7,8-tetrahydrofolate-binding positions include glutamate 240 and 348-350; that span reads SPF.

This sequence belongs to the SHMT family. As to quaternary structure, homodimer. Pyridoxal 5'-phosphate is required as a cofactor.

It is found in the cytoplasm. It carries out the reaction (6R)-5,10-methylene-5,6,7,8-tetrahydrofolate + glycine + H2O = (6S)-5,6,7,8-tetrahydrofolate + L-serine. The protein operates within one-carbon metabolism; tetrahydrofolate interconversion. Its pathway is amino-acid biosynthesis; glycine biosynthesis; glycine from L-serine: step 1/1. Catalyzes the reversible interconversion of serine and glycine with tetrahydrofolate (THF) serving as the one-carbon carrier. This reaction serves as the major source of one-carbon groups required for the biosynthesis of purines, thymidylate, methionine, and other important biomolecules. Also exhibits THF-independent aldolase activity toward beta-hydroxyamino acids, producing glycine and aldehydes, via a retro-aldol mechanism. The protein is Serine hydroxymethyltransferase of Campylobacter jejuni subsp. jejuni serotype O:23/36 (strain 81-176).